The primary structure comprises 92 residues: MTQVCIAAYVYGVVQGVGFRYNTQHQATALGLSGYARNLDDGSVEVLACGEQPQVDKLVEWLKNGGPRSARVDRVLVEPRGAADFQGFSIRY.

The region spanning 5-92 (CIAAYVYGVV…ADFQGFSIRY (88 aa)) is the Acylphosphatase-like domain. Active-site residues include Arg20 and Asn38.

Belongs to the acylphosphatase family.

It carries out the reaction an acyl phosphate + H2O = a carboxylate + phosphate + H(+). The sequence is that of Acylphosphatase (acyP) from Serratia proteamaculans (strain 568).